Reading from the N-terminus, the 311-residue chain is Aspartate carbamoyltransferase catalytic subunit (311 aa).

Carbamoyl phosphate contacts are provided by R55 and T56. An L-aspartate-binding site is contributed by K85. Carbamoyl phosphate is bound by residues R106, H135, and Q138. Residues R168 and R230 each contribute to the L-aspartate site. Residues L268 and P269 each coordinate carbamoyl phosphate.

This sequence belongs to the aspartate/ornithine carbamoyltransferase superfamily. ATCase family. As to quaternary structure, heterododecamer (2C3:3R2) of six catalytic PyrB chains organized as two trimers (C3), and six regulatory PyrI chains organized as three dimers (R2).

The catalysed reaction is carbamoyl phosphate + L-aspartate = N-carbamoyl-L-aspartate + phosphate + H(+). Its pathway is pyrimidine metabolism; UMP biosynthesis via de novo pathway; (S)-dihydroorotate from bicarbonate: step 2/3. In terms of biological role, catalyzes the condensation of carbamoyl phosphate and aspartate to form carbamoyl aspartate and inorganic phosphate, the committed step in the de novo pyrimidine nucleotide biosynthesis pathway. In Cronobacter sakazakii (strain ATCC BAA-894) (Enterobacter sakazakii), this protein is Aspartate carbamoyltransferase catalytic subunit.